A 370-amino-acid polypeptide reads, in one-letter code: NADH-quinone oxidoreductase subunit D 2 (370 aa).

It belongs to the complex I 49 kDa subunit family. In terms of assembly, NDH-1 is composed of 14 different subunits. Subunits NuoB, C, D, E, F, and G constitute the peripheral sector of the complex.

It is found in the cell membrane. It catalyses the reaction a quinone + NADH + 5 H(+)(in) = a quinol + NAD(+) + 4 H(+)(out). Its function is as follows. NDH-1 shuttles electrons from NADH, via FMN and iron-sulfur (Fe-S) centers, to quinones in the respiratory chain. The immediate electron acceptor for the enzyme in this species is believed to be ubiquinone. Couples the redox reaction to proton translocation (for every two electrons transferred, four hydrogen ions are translocated across the cytoplasmic membrane), and thus conserves the redox energy in a proton gradient. This Herpetosiphon aurantiacus (strain ATCC 23779 / DSM 785 / 114-95) protein is NADH-quinone oxidoreductase subunit D 2.